The primary structure comprises 426 residues: Histidine--tRNA ligase (426 aa).

Belongs to the class-II aminoacyl-tRNA synthetase family.

The protein resides in the cytoplasm. It carries out the reaction tRNA(His) + L-histidine + ATP = L-histidyl-tRNA(His) + AMP + diphosphate + H(+). In Saccharolobus islandicus (strain Y.N.15.51 / Yellowstone #2) (Sulfolobus islandicus), this protein is Histidine--tRNA ligase.